The following is a 175-amino-acid chain: DELTA-stichotoxin-She4b (175 aa).

Residues 1–10 (ALAGTIIAGA) form a plays an important role in the hemolytic activity region. The segment at 9–28 (GASLTFQVLDKVLEELGKVS) is N-terminal region. Residues Ser52, Val85, Ser103, Pro105, Tyr131, Tyr135, and Tyr136 each contribute to the phosphocholine site. Positions 103–118 (SVPFDYNWYSNWWDVK) are trp-rich region, which is important for the binding to lipid membrane. The Cell attachment site, crucial for protein stability motif lies at 141–143 (RGD).

In terms of assembly, octamer or nonamer in membranes. Monomer in the soluble state. Originally described as forming tetramer in the presence of a lipidic interface. As to expression, expressed in tentacles and mesenteric filaments.

It localises to the secreted. It is found in the nematocyst. Its subcellular location is the target cell membrane. Pore-forming protein that forms cations-selective hydrophilic pores of around 1 nm and causes cardiac stimulation and cytolysis. Pore formation is a multi-step process that involves specific recognition of membrane sphingomyelin (but neither cholesterol nor phosphatidylcholine) using aromatic rich region and adjacent phosphocholine (POC) binding site, firm binding to the membrane (mainly driven by hydrophobic interactions) accompanied by the transfer of the N-terminal region to the lipid-water interface and finally pore formation after oligomerization of monomers. Cytolytic effects include red blood cells hemolysis, platelet aggregation and lysis, cytotoxic and cytostatic effects on fibroblasts. Lethality in mammals has been ascribed to severe vasospasm of coronary vessels, cardiac arrhythmia, and inotropic effects. The polypeptide is DELTA-stichotoxin-She4b (Stichodactyla helianthus (Sun anemone)).